A 428-amino-acid polypeptide reads, in one-letter code: C4-dicarboxylate transport protein (428 aa).

Helical transmembrane passes span 4–24 (SLFKSLYFQVLTAIAIGILLG), 44–64 (LIKMVIAPVIFCTVVTGIAGM), 76–96 (VALLYFEIVSTIALIIGLIIV), 142–162 (IGAFASGNILQVLLFAVMFGF), 184–204 (VIFGIINMIMRLAPIGAFGAM), 222–242 (LIVCFYITCILFVVVVLGSIA), 289–309 (VVGLVIPTGYSFNLDGTSIYL), 326–346 (IFHQVTLLVVLLLSSKGAAGV), and 352–372 (IVLAATISAVGHLPVAGLALI).

Belongs to the dicarboxylate/amino acid:cation symporter (DAACS) (TC 2.A.23) family.

Its subcellular location is the cell inner membrane. Its function is as follows. Responsible for the transport of dicarboxylates such as succinate, fumarate, and malate from the periplasm across the membrane. This chain is C4-dicarboxylate transport protein, found in Citrobacter koseri (strain ATCC BAA-895 / CDC 4225-83 / SGSC4696).